A 366-amino-acid chain; its full sequence is tRNA(Met) cytidine acetate ligase (366 aa).

Residues isoleucine 7–leucine 20, glycine 101, asparagine 145, and arginine 170 contribute to the ATP site.

Belongs to the TmcAL family.

It localises to the cytoplasm. The enzyme catalyses cytidine(34) in elongator tRNA(Met) + acetate + ATP = N(4)-acetylcytidine(34) in elongator tRNA(Met) + AMP + diphosphate. Catalyzes the formation of N(4)-acetylcytidine (ac(4)C) at the wobble position of elongator tRNA(Met), using acetate and ATP as substrates. First activates an acetate ion to form acetyladenylate (Ac-AMP) and then transfers the acetyl group to tRNA to form ac(4)C34. The protein is tRNA(Met) cytidine acetate ligase of Pediococcus pentosaceus (strain ATCC 25745 / CCUG 21536 / LMG 10740 / 183-1w).